We begin with the raw amino-acid sequence, 188 residues long: Acireductone dioxygenase (188 aa).

Fe(2+) is bound by residues histidine 97, histidine 99, glutamate 103, and histidine 141. Ni(2+) contacts are provided by histidine 97, histidine 99, glutamate 103, and histidine 141.

Belongs to the acireductone dioxygenase (ARD) family. In terms of assembly, monomer. Fe(2+) is required as a cofactor. The cofactor is Ni(2+).

The enzyme catalyses 1,2-dihydroxy-5-(methylsulfanyl)pent-1-en-3-one + O2 = 3-(methylsulfanyl)propanoate + CO + formate + 2 H(+). It catalyses the reaction 1,2-dihydroxy-5-(methylsulfanyl)pent-1-en-3-one + O2 = 4-methylsulfanyl-2-oxobutanoate + formate + 2 H(+). It participates in amino-acid biosynthesis; L-methionine biosynthesis via salvage pathway; L-methionine from S-methyl-5-thio-alpha-D-ribose 1-phosphate: step 5/6. In terms of biological role, catalyzes 2 different reactions between oxygen and the acireductone 1,2-dihydroxy-3-keto-5-methylthiopentene (DHK-MTPene) depending upon the metal bound in the active site. Fe-containing acireductone dioxygenase (Fe-ARD) produces formate and 2-keto-4-methylthiobutyrate (KMTB), the alpha-ketoacid precursor of methionine in the methionine recycle pathway. Ni-containing acireductone dioxygenase (Ni-ARD) produces methylthiopropionate, carbon monoxide and formate, and does not lie on the methionine recycle pathway. The sequence is that of Acireductone dioxygenase from Xanthomonas oryzae pv. oryzae (strain MAFF 311018).